Here is a 207-residue protein sequence, read N- to C-terminus: Guanylate kinase (207 aa).

Residues 6–185 (GLLIVLSGPS…AKNRIQSIVE (180 aa)) form the Guanylate kinase-like domain. 13-20 (GPSGVGKG) contributes to the ATP binding site.

The protein belongs to the guanylate kinase family.

It is found in the cytoplasm. It catalyses the reaction GMP + ATP = GDP + ADP. Functionally, essential for recycling GMP and indirectly, cGMP. The sequence is that of Guanylate kinase from Staphylococcus epidermidis (strain ATCC 35984 / DSM 28319 / BCRC 17069 / CCUG 31568 / BM 3577 / RP62A).